We begin with the raw amino-acid sequence, 490 residues long: Betaine aldehyde dehydrogenase (490 aa).

The K(+) site is built by Ser-26, Ile-27, and Asp-93. Residue 150–152 coordinates NAD(+); sequence GAW. Lys-162 acts as the Charge relay system in catalysis. Position 176-179 (176-179) interacts with NAD(+); sequence KPSE. A K(+)-binding site is contributed by Val-180. 230–233 serves as a coordination point for NAD(+); it reads GTDT. Residue Leu-246 participates in K(+) binding. Glu-252 (proton acceptor) is an active-site residue. Gly-254, Cys-286, and Glu-387 together coordinate NAD(+). Cys-286 (nucleophile) is an active-site residue. Cys-286 carries the post-translational modification Cysteine sulfenic acid (-SOH). K(+)-binding residues include Lys-457 and Gly-460. The active-site Charge relay system is the Glu-464.

This sequence belongs to the aldehyde dehydrogenase family. In terms of assembly, dimer of dimers. K(+) is required as a cofactor.

It carries out the reaction betaine aldehyde + NAD(+) + H2O = glycine betaine + NADH + 2 H(+). Its pathway is amine and polyamine biosynthesis; betaine biosynthesis via choline pathway; betaine from betaine aldehyde: step 1/1. Involved in the biosynthesis of the osmoprotectant glycine betaine. Catalyzes the irreversible oxidation of betaine aldehyde to the corresponding acid. This chain is Betaine aldehyde dehydrogenase, found in Pseudomonas syringae pv. tomato (strain ATCC BAA-871 / DC3000).